The sequence spans 231 residues: SrfA-induced gene F protein (231 aa).

This is SrfA-induced gene F protein (sigF) from Dictyostelium discoideum (Social amoeba).